A 1034-amino-acid polypeptide reads, in one-letter code: Probable outer membrane protein PmpF (1034 aa).

The first 25 residues, 1 to 25 (MIKRTSLSFACLSFFYLSTISILQA), serve as a signal peptide directing secretion. Low complexity-rich tracts occupy residues 664–673 (SAPTSATSIA) and 680–709 (ETFT…ASNS). The segment at 664 to 709 (SAPTSATSIAEQKKTSETFTPSNTTTASIPNIKASAGSGSGSASNS) is disordered. Positions 755-1034 (RSLLPDNSWF…YINAGGALVF (280 aa)) constitute an Autotransporter domain.

The protein belongs to the PMP outer membrane protein family.

The protein localises to the secreted. It localises to the cell wall. The protein resides in the cell outer membrane. The sequence is that of Probable outer membrane protein PmpF (pmpF) from Chlamydia trachomatis serovar D (strain ATCC VR-885 / DSM 19411 / UW-3/Cx).